The sequence spans 368 residues: 3-dehydroquinate synthase (368 aa).

NAD(+) contacts are provided by residues 112 to 116 (GVVGD), 136 to 137 (TT), lysine 149, lysine 158, and 176 to 179 (FLDT). Residues glutamate 191, histidine 257, and histidine 274 each coordinate Zn(2+).

Belongs to the sugar phosphate cyclases superfamily. Dehydroquinate synthase family. Co(2+) is required as a cofactor. Zn(2+) serves as cofactor. The cofactor is NAD(+).

The protein localises to the cytoplasm. It catalyses the reaction 7-phospho-2-dehydro-3-deoxy-D-arabino-heptonate = 3-dehydroquinate + phosphate. It participates in metabolic intermediate biosynthesis; chorismate biosynthesis; chorismate from D-erythrose 4-phosphate and phosphoenolpyruvate: step 2/7. Functionally, catalyzes the conversion of 3-deoxy-D-arabino-heptulosonate 7-phosphate (DAHP) to dehydroquinate (DHQ). This chain is 3-dehydroquinate synthase, found in Natranaerobius thermophilus (strain ATCC BAA-1301 / DSM 18059 / JW/NM-WN-LF).